We begin with the raw amino-acid sequence, 258 residues long: Histidine/lysine/arginine/ornithine transport ATP-binding protein HisP (258 aa).

An ABC transporter domain is found at 7 to 253; sequence LHVIDLHKRY…PQSPRLQQFL (247 aa). Ser-41, Gly-42, Gly-44, Lys-45, Ser-46, and Thr-47 together coordinate ATP.

Belongs to the ABC transporter superfamily. In terms of assembly, the HisPMQJ complex is composed of two ATP-binding proteins (HisP), two transmembrane proteins (HisM and HisQ) and a solute-binding protein (HisJ). The HisPMQ-ArgT complex is composed of two ATP-binding proteins (HisP), two transmembrane proteins (HisM and HisQ) and a solute-binding protein (ArgT).

It localises to the cell inner membrane. It carries out the reaction a polar amino acid(out) + ATP + H2O = a polar amino acid(in) + ADP + phosphate + H(+). It catalyses the reaction L-histidine(out) + ATP + H2O = L-histidine(in) + ADP + phosphate + H(+). The enzyme catalyses L-lysine(out) + ATP + H2O = L-lysine(in) + ADP + phosphate + H(+). The catalysed reaction is L-arginine(out) + ATP + H2O = L-arginine(in) + ADP + phosphate + H(+). It carries out the reaction L-ornithine(out) + ATP + H2O = L-ornithine(in) + ADP + phosphate + H(+). Its activity is regulated as follows. Isolated, soluble HisP has a very low ATPase activity. ATPase activity is slightly increased in the presence of HisM and HisQ, and strongly increased when HisJ is also present. Its function is as follows. Part of the ABC transporter complex HisPMQJ involved in histidine transport. Is also part of the ABC transporter complex HisPMQ-ArgT involved in lysine/arginine/ornithine transport. Shows ATPase activity. Responsible for energy coupling to the transport system. This is Histidine/lysine/arginine/ornithine transport ATP-binding protein HisP from Salmonella typhimurium (strain LT2 / SGSC1412 / ATCC 700720).